An 84-amino-acid polypeptide reads, in one-letter code: DNA-directed RNA polymerase subunit Rpo5 (84 aa).

This sequence belongs to the archaeal Rpo5/eukaryotic RPB5 RNA polymerase subunit family. In terms of assembly, part of the 13-subunit RNA polymerase.

Its subcellular location is the cytoplasm. The catalysed reaction is RNA(n) + a ribonucleoside 5'-triphosphate = RNA(n+1) + diphosphate. Functionally, DNA-dependent RNA polymerase (RNAP) catalyzes the transcription of DNA into RNA using the four ribonucleoside triphosphates as substrates. Reconstitution experiments show this subunit is required for basic activity. This is DNA-directed RNA polymerase subunit Rpo5 from Sulfolobus acidocaldarius (strain ATCC 33909 / DSM 639 / JCM 8929 / NBRC 15157 / NCIMB 11770).